Consider the following 318-residue polypeptide: Ubiquitin-like domain-containing CTD phosphatase 1 (318 aa).

The region spanning 3-81 is the Ubiquitin-like domain; that stretch reads VSVIIKWGGQ…IMMMGTREES (79 aa). Positions 133–294 constitute an FCP1 homology domain; sequence PRPGKRLLVL…YKLSQYLKEI (162 aa). 3 residues coordinate Mg(2+): D143, D145, and D253.

The cofactor is Mg(2+).

It is found in the nucleus. The enzyme catalyses O-phospho-L-seryl-[protein] + H2O = L-seryl-[protein] + phosphate. It carries out the reaction O-phospho-L-threonyl-[protein] + H2O = L-threonyl-[protein] + phosphate. Functionally, dephosphorylates 26S nuclear proteasomes, thereby decreasing their proteolytic activity. Recruited to the 19S regulatory particle of the 26S proteasome where it dephosphorylates 19S component psmc2 which impairs psmc2 ATPase activity and disrupts 26S proteasome assembly. Has also been reported to stimulate the proteolytic activity of the 26S proteasome. The sequence is that of Ubiquitin-like domain-containing CTD phosphatase 1 (ublcp1) from Danio rerio (Zebrafish).